A 384-amino-acid polypeptide reads, in one-letter code: MKSNTYELHNYADLNDMARATDSKDSRKRKTASARGEKYSLRQKRQKRGSNEDGESANLADFQLELDPIAEPASKSRKNAPTKSKTKAPPLSKYRRKTANARERTRMREINTAFETLRHCVPEAIKGEDAANTNEKLTKITTLRLAMKYITMLTDSIRDPSYESEFIGECLEESANREARVDLEANEEAEVELPVPVAKKPAKTKGSGKKSSAASKRQSQKQAKIVPQIPPISSGESCYATSSIGSPASSAYASLSSSSNSHSSSSSPGLELDSLVGLNGISALDSLLLDTSDGDSLSCLSPGYGSLLTGSGESLLPGCRGDLPMSGLEKSDVELSLRLLDQSSKDSFDFASDQQPSACISSFSALDGYPFDLLHSDFPDMFLT.

2 disordered regions span residues 1–101 (MKSN…TANA) and 187–227 (EEAE…KIVP). Over residues 75–86 (KSRKNAPTKSKT) the composition is skewed to basic residues. One can recognise a bHLH domain in the interval 94 to 153 (YRRKTANARERTRMREINTAFETLRHCVPEAIKGEDAANTNEKLTKITTLRLAMKYITML). Over residues 209 to 224 (KKSSAASKRQSQKQAK) the composition is skewed to low complexity.

Efficient DNA binding requires dimerization with another bHLH protein, possibly with da. As to expression, expressed almost exclusively in the attachments sites of the somatic muscles to tendon cells in the epidermis.

The protein resides in the nucleus. In terms of biological role, probably plays an important role in the differentiation of epidermal cells into the tendon cells that form the attachment sites for all muscles. The polypeptide is Helix-loop-helix protein delilah (tx) (Drosophila melanogaster (Fruit fly)).